The primary structure comprises 230 residues: Uracil-DNA glycosylase (230 aa).

The active-site Proton acceptor is the Asp71.

It belongs to the uracil-DNA glycosylase (UDG) superfamily. UNG family.

It is found in the cytoplasm. It carries out the reaction Hydrolyzes single-stranded DNA or mismatched double-stranded DNA and polynucleotides, releasing free uracil.. Functionally, excises uracil residues from the DNA which can arise as a result of misincorporation of dUMP residues by DNA polymerase or due to deamination of cytosine. The sequence is that of Uracil-DNA glycosylase from Nocardioides sp. (strain ATCC BAA-499 / JS614).